A 158-amino-acid chain; its full sequence is Cyclic pyranopterin monophosphate synthase (158 aa).

Substrate is bound by residues 74–76 (MCH) and 112–113 (ME). Aspartate 127 is a catalytic residue.

It belongs to the MoaC family. Homohexamer; trimer of dimers.

It catalyses the reaction (8S)-3',8-cyclo-7,8-dihydroguanosine 5'-triphosphate = cyclic pyranopterin phosphate + diphosphate. It functions in the pathway cofactor biosynthesis; molybdopterin biosynthesis. Its function is as follows. Catalyzes the conversion of (8S)-3',8-cyclo-7,8-dihydroguanosine 5'-triphosphate to cyclic pyranopterin monophosphate (cPMP). The sequence is that of Cyclic pyranopterin monophosphate synthase from Helicobacter pylori (strain ATCC 700392 / 26695) (Campylobacter pylori).